The primary structure comprises 181 residues: ATP-dependent protease subunit HslV (181 aa).

Residue threonine 2 is part of the active site. 3 residues coordinate Na(+): glycine 157, cysteine 160, and threonine 163.

This sequence belongs to the peptidase T1B family. HslV subfamily. In terms of assembly, a double ring-shaped homohexamer of HslV is capped on each side by a ring-shaped HslU homohexamer. The assembly of the HslU/HslV complex is dependent on binding of ATP.

The protein resides in the cytoplasm. The enzyme catalyses ATP-dependent cleavage of peptide bonds with broad specificity.. Allosterically activated by HslU binding. In terms of biological role, protease subunit of a proteasome-like degradation complex believed to be a general protein degrading machinery. This chain is ATP-dependent protease subunit HslV, found in Hahella chejuensis (strain KCTC 2396).